The chain runs to 309 residues: Olfactory receptor 1A1 (309 aa).

The Extracellular segment spans residues 1–25 (MRENNQSSTLEFILLGVTGQQEQED). N-linked (GlcNAc...) asparagine glycosylation is present at N5. A helical transmembrane segment spans residues 26–49 (FFYILFLFIYPITLIGNLLIVLAI). Topologically, residues 50-57 (CSDVRLHN) are cytoplasmic. A helical membrane pass occupies residues 58 to 79 (PMYFLLANLSLVDIFFSSVTIP). The Extracellular portion of the chain corresponds to 80 to 100 (KMLANHLLGSKSISFGGCLTQ). An intrachain disulfide couples C97 to C189. A helical membrane pass occupies residues 101-120 (MYFMIALGNTDSYILAAMAY). At 121 to 139 (DRAVAISRPLHYTTIMSPR) the chain is on the cytoplasmic side. Residues 140–158 (SCIWLIAGSWVIGNANALP) form a helical membrane-spanning segment. Over 159-195 (HTLLTASLSFCGNQEVANFYCDITPLLKLSCSDIHFH) the chain is Extracellular. The chain crosses the membrane as a helical span at residues 196-218 (VKMMYLGVGIFSVPLLCIIVSYI). At 219-235 (RVFSTVFQVPSTKGVLK) the chain is on the cytoplasmic side. A helical membrane pass occupies residues 236–258 (AFSTCGSHLTVVSLYYGTVMGTY). The Extracellular portion of the chain corresponds to 259 to 270 (FRPLTNYSLKDA). N-linked (GlcNAc...) asparagine glycosylation occurs at N264. Residues 271-290 (VITVMYTAVTPMLNPFIYSL) form a helical membrane-spanning segment. Topologically, residues 291 to 309 (RNRDMKAALRKLFNKRISS) are cytoplasmic.

This sequence belongs to the G-protein coupled receptor 1 family.

It localises to the cell membrane. Functionally, odorant receptor. The chain is Olfactory receptor 1A1 (OR1A1) from Homo sapiens (Human).